An 85-amino-acid polypeptide reads, in one-letter code: Large ribosomal subunit protein bL27 (85 aa).

The tract at residues M1–R20 is disordered.

This sequence belongs to the bacterial ribosomal protein bL27 family.

In Colwellia psychrerythraea (strain 34H / ATCC BAA-681) (Vibrio psychroerythus), this protein is Large ribosomal subunit protein bL27.